The following is a 222-amino-acid chain: Small ribosomal subunit protein eS8z (222 aa).

Disordered stretches follow at residues 1 to 37 (MGISRDSIHKRRATGGKQKQWRKKRKYEMGRQPANTK) and 125 to 147 (KKKSASSTKKDGEEGEEAAVAAP). Basic residues predominate over residues 8 to 26 (IHKRRATGGKQKQWRKKRK).

Belongs to the eukaryotic ribosomal protein eS8 family.

This chain is Small ribosomal subunit protein eS8z (RPS8A), found in Arabidopsis thaliana (Mouse-ear cress).